A 554-amino-acid polypeptide reads, in one-letter code: Protein SINE2 (554 aa).

The tract at residues 17-290 (DKDPDSHKTA…MAAHETMRQA (274 aa)) is ARMADILLO-type fold. Disordered regions lie at residues 306-332 (CKPR…VYSR), 411-442 (NESV…KHHR), and 465-487 (ETSS…TTED). Residues 311-321 (SLSGSVKSTSS) are compositionally biased toward low complexity. Residues 322-332 (LREHDGSVYSR) show a composition bias toward basic and acidic residues. Residues 419 to 431 (NRSRSSRRNTKKR) are compositionally biased toward basic residues. The span at 465–485 (ETSSSSSIYDTSGTTTPTNTT) shows a compositional bias: low complexity. The region spanning 509–554 (LDPRLGRSKGVLKLGLSVFSIAVAGFASFMWMYLQDDMMPPHLVPT) is the KASH domain. The helical transmembrane segment at 522-542 (LGLSVFSIAVAGFASFMWMYL) threads the bilayer. The short motif at 551-554 (LVPT) is the Required for nuclear localization element.

As to quaternary structure, interacts with SUN1 and SUN2. In terms of tissue distribution, expressed in epidermal cells, mesophyll cells, trichomes and root cells.

The protein resides in the nucleus membrane. Plays a role in innate immunity against the oomycete pathogen A.arabidopsidis (Hpa). The protein is Protein SINE2 of Arabidopsis thaliana (Mouse-ear cress).